We begin with the raw amino-acid sequence, 184 residues long: MVSMLLVGRIGKSVGLNGGLRLHLESDFPECLKKGVKVSVAPLNAFFCTSSFKGYTIHSYEHAKNLLFLETIHTPEKAKELTNLGLFMSEAESKKLCVLKDGEFFYCDLVGLSVVEENETLGKVVEIQRISQIDYFMVETARSLVEKGLAKIFLIPYRDFYIKEILLQDKKITTNNAKTLLENS.

Residues 101-180 (DGEFFYCDLV…KITTNNAKTL (80 aa)) form the PRC barrel domain.

The protein belongs to the RimM family. Binds ribosomal protein uS19.

The protein resides in the cytoplasm. Functionally, an accessory protein needed during the final step in the assembly of 30S ribosomal subunit, possibly for assembly of the head region. Essential for efficient processing of 16S rRNA. May be needed both before and after RbfA during the maturation of 16S rRNA. It has affinity for free ribosomal 30S subunits but not for 70S ribosomes. In Helicobacter pylori (strain Shi470), this protein is Ribosome maturation factor RimM.